Reading from the N-terminus, the 366-residue chain is 3-dehydroquinate synthase (366 aa).

Residues 107 to 111 (GVIGD), 131 to 132 (TT), Lys144, and Lys153 contribute to the NAD(+) site. 3 residues coordinate Zn(2+): Glu186, His251, and His268.

The protein belongs to the sugar phosphate cyclases superfamily. Dehydroquinate synthase family. It depends on Co(2+) as a cofactor. The cofactor is Zn(2+). Requires NAD(+) as cofactor.

It localises to the cytoplasm. It catalyses the reaction 7-phospho-2-dehydro-3-deoxy-D-arabino-heptonate = 3-dehydroquinate + phosphate. Its pathway is metabolic intermediate biosynthesis; chorismate biosynthesis; chorismate from D-erythrose 4-phosphate and phosphoenolpyruvate: step 2/7. In terms of biological role, catalyzes the conversion of 3-deoxy-D-arabino-heptulosonate 7-phosphate (DAHP) to dehydroquinate (DHQ). This chain is 3-dehydroquinate synthase, found in Microcystis aeruginosa (strain NIES-843 / IAM M-2473).